Here is a 282-residue protein sequence, read N- to C-terminus: Para-Rep C2 (282 aa).

The CRESS-DNA virus Rep endonuclease domain occupies 1–99; it reads MASKRWCFTL…ETLIAEIGAP (99 aa). Positions 7 to 10 match the RCR-1 motif; sequence CFTL. Residues Glu-38 and His-47 each contribute to the a divalent metal cation site. Positions 47–49 match the RCR-2 motif; it reads HLQ. The Nuclear localization signal motif lies at 56-77; it reads KLIRLGGLKKKFGSIAHWEIAK. The active-site For DNA cleavage activity is Tyr-86. The short motif at 86–89 is the RCR-3 element; the sequence is YCTK. The Nuclear localization signal signature appears at 99 to 105; sequence PVKKGSN. An ATP-binding site is contributed by 174-182; it reads GPDGGEGKS.

It belongs to the nanoviridea/circoviridae replication-associated protein family. Homooligomer (Potential). Rep binds to repeated DNA motifs (iterons). Requires Mg(2+) as cofactor. Mn(2+) is required as a cofactor.

It is found in the host nucleus. The enzyme catalyses ATP + H2O = ADP + phosphate + H(+). In terms of biological role, initiates and terminates the replication only of its own subviral DNA molecule. The closed circular ssDNA genome is first converted to a superhelical dsDNA. Rep binds a specific hairpin at the genome origin of replication. Introduces an endonucleolytic nick within the intergenic region of the genome, thereby initiating the rolling circle replication (RCR). Following cleavage, binds covalently to the 5'-phosphate of DNA as a tyrosyl ester. The cleavage gives rise to a free 3'-OH that serves as a primer for the cellular DNA polymerase. The polymerase synthesizes the (+) strand DNA by rolling circle mechanism. After one round of replication, a Rep-catalyzed nucleotidyl transfer reaction releases a circular single-stranded virus genome, thereby terminating the replication. Displays origin-specific DNA cleavage, nucleotidyl transferase, ATPase and helicase activities. In Milk vetch dwarf C2 alphasatellite (MVDC2A), this protein is Para-Rep C2 (C2).